The sequence spans 199 residues: N-(5'-phosphoribosyl)anthranilate isomerase (199 aa).

This sequence belongs to the TrpF family.

The catalysed reaction is N-(5-phospho-beta-D-ribosyl)anthranilate = 1-(2-carboxyphenylamino)-1-deoxy-D-ribulose 5-phosphate. It functions in the pathway amino-acid biosynthesis; L-tryptophan biosynthesis; L-tryptophan from chorismate: step 3/5. The polypeptide is N-(5'-phosphoribosyl)anthranilate isomerase (Campylobacter jejuni subsp. jejuni serotype O:2 (strain ATCC 700819 / NCTC 11168)).